The following is a 166-amino-acid chain: Large ribosomal subunit protein uL10 (166 aa).

This sequence belongs to the universal ribosomal protein uL10 family. As to quaternary structure, part of the ribosomal stalk of the 50S ribosomal subunit. The N-terminus interacts with L11 and the large rRNA to form the base of the stalk. The C-terminus forms an elongated spine to which L12 dimers bind in a sequential fashion forming a multimeric L10(L12)X complex.

Forms part of the ribosomal stalk, playing a central role in the interaction of the ribosome with GTP-bound translation factors. The sequence is that of Large ribosomal subunit protein uL10 from Staphylococcus carnosus (strain TM300).